Consider the following 188-residue polypeptide: MQSNSSSFPDWHGTTILAVRKNGSTVIAGDGQVSMGPTVVKGNARKVRRLAGGKVVAGFAGATADAFTLIERLEAKLEQYPDQLARACVDLAKDWRTDRYLRRLEAMLLVADKTAIYTVTGVGDVLEPGESLGGGAVAAIGSGGNYALAAGKALIDLDLSAEDIARKAMGIAAEICVYTNGNLTVESL.

Residue T14 is part of the active site. Residues A173, C176, and T179 each contribute to the Na(+) site.

This sequence belongs to the peptidase T1B family. HslV subfamily. A double ring-shaped homohexamer of HslV is capped on each side by a ring-shaped HslU homohexamer. The assembly of the HslU/HslV complex is dependent on binding of ATP.

Its subcellular location is the cytoplasm. It carries out the reaction ATP-dependent cleavage of peptide bonds with broad specificity.. With respect to regulation, allosterically activated by HslU binding. Its function is as follows. Protease subunit of a proteasome-like degradation complex believed to be a general protein degrading machinery. This chain is ATP-dependent protease subunit HslV, found in Caulobacter vibrioides (strain ATCC 19089 / CIP 103742 / CB 15) (Caulobacter crescentus).